A 189-amino-acid polypeptide reads, in one-letter code: Large ribosomal subunit protein uL5 (189 aa).

It belongs to the universal ribosomal protein uL5 family. In terms of assembly, part of the 50S ribosomal subunit; part of the 5S rRNA/L5/L18/L25 subcomplex. Contacts the 5S rRNA and the P site tRNA. Forms a bridge to the 30S subunit in the 70S ribosome.

This is one of the proteins that bind and probably mediate the attachment of the 5S RNA into the large ribosomal subunit, where it forms part of the central protuberance. In the 70S ribosome it contacts protein S13 of the 30S subunit (bridge B1b), connecting the 2 subunits; this bridge is implicated in subunit movement. Contacts the P site tRNA; the 5S rRNA and some of its associated proteins might help stabilize positioning of ribosome-bound tRNAs. The chain is Large ribosomal subunit protein uL5 from Kocuria rhizophila (strain ATCC 9341 / DSM 348 / NBRC 103217 / DC2201).